Reading from the N-terminus, the 338-residue chain is MSPAGKLPSEAERILVRKSGAWTNPSYGSYPEKRPILEYIEKGVVNIDKPKGPTSHEVAAWVKAILGVSTAGHAGSLDPKVTGLLPTLLGKATKAVPALRLSGKEYVCLLKLHKEMPQKLVRKVCEEFTGPIYQMPPIKSAVKRVIRIRTIYYLEVLEIEGSFVLFRVGCEAGTYIRKLCHDIGLALGCGGHMQELRRTKAGPFTEETLVTLQDLKDAYVLWKEDGDESEIRRVIMPMETAVSHLPKIILRDSAVDAICSGAALAVPGITSLDANLKKGELIALFTLKGELVALAKAEMSTEELLKASTGLAATSVRIMMEIGTYPKGWTKKEYGVES.

Asp-78 functions as the Nucleophile in the catalytic mechanism. The 76-residue stretch at 245–320 (LPKIILRDSA…LAATSVRIMM (76 aa)) folds into the PUA domain.

It belongs to the pseudouridine synthase TruB family. Type 2 subfamily.

The catalysed reaction is uridine(55) in tRNA = pseudouridine(55) in tRNA. Its function is as follows. Could be responsible for synthesis of pseudouridine from uracil-55 in the psi GC loop of transfer RNAs. The sequence is that of Probable tRNA pseudouridine synthase B from Methanosarcina barkeri (strain Fusaro / DSM 804).